We begin with the raw amino-acid sequence, 387 residues long: Succinate--CoA ligase [ADP-forming] subunit beta (387 aa).

One can recognise an ATP-grasp domain in the interval Lys-9 to Arg-244. ATP is bound by residues Lys-46, Gly-53–Gly-55, Glu-99, Cys-102, and Glu-107. Residues Asn-199 and Asp-213 each coordinate Mg(2+). Residues Asn-264 and Gly-321–Val-323 each bind substrate.

Belongs to the succinate/malate CoA ligase beta subunit family. Heterotetramer of two alpha and two beta subunits. Mg(2+) serves as cofactor.

The enzyme catalyses succinate + ATP + CoA = succinyl-CoA + ADP + phosphate. The catalysed reaction is GTP + succinate + CoA = succinyl-CoA + GDP + phosphate. The protein operates within carbohydrate metabolism; tricarboxylic acid cycle; succinate from succinyl-CoA (ligase route): step 1/1. In terms of biological role, succinyl-CoA synthetase functions in the citric acid cycle (TCA), coupling the hydrolysis of succinyl-CoA to the synthesis of either ATP or GTP and thus represents the only step of substrate-level phosphorylation in the TCA. The beta subunit provides nucleotide specificity of the enzyme and binds the substrate succinate, while the binding sites for coenzyme A and phosphate are found in the alpha subunit. In Legionella pneumophila (strain Paris), this protein is Succinate--CoA ligase [ADP-forming] subunit beta.